The following is a 206-amino-acid chain: LexA repressor (206 aa).

A DNA-binding region (H-T-H motif) is located at residues 27-47 (YEEIRQNLGFRSLNAVFKHLK). Active-site for autocatalytic cleavage activity residues include Ser120 and Lys157.

The protein belongs to the peptidase S24 family. Homodimer.

The catalysed reaction is Hydrolysis of Ala-|-Gly bond in repressor LexA.. Functionally, represses a number of genes involved in the response to DNA damage (SOS response), including recA and lexA. In the presence of single-stranded DNA, RecA interacts with LexA causing an autocatalytic cleavage which disrupts the DNA-binding part of LexA, leading to derepression of the SOS regulon and eventually DNA repair. The chain is LexA repressor from Syntrophobacter fumaroxidans (strain DSM 10017 / MPOB).